Reading from the N-terminus, the 134-residue chain is Holo-[acyl-carrier-protein] synthase (134 aa).

Positions 8 and 57 each coordinate Mg(2+).

This sequence belongs to the P-Pant transferase superfamily. AcpS family. It depends on Mg(2+) as a cofactor.

The protein resides in the cytoplasm. The catalysed reaction is apo-[ACP] + CoA = holo-[ACP] + adenosine 3',5'-bisphosphate + H(+). Functionally, transfers the 4'-phosphopantetheine moiety from coenzyme A to a Ser of acyl-carrier-protein. The sequence is that of Holo-[acyl-carrier-protein] synthase from Brucella abortus (strain S19).